The following is a 712-amino-acid chain: Anaerobic ribonucleoside-triphosphate reductase (712 aa).

One can recognise an ATP-cone domain in the interval 3–92 (PHVMKRDGCK…EYRHDRDIER (90 aa)). A Glycine radical domain is found at 583 to 708 (KKVNPYDKID…VKRRVKHLGN (126 aa)). 4 residues coordinate Zn(2+): cysteine 644, cysteine 647, cysteine 662, and cysteine 665. At glycine 681 the chain carries Glycine radical.

This sequence belongs to the anaerobic ribonucleoside-triphosphate reductase family. Homodimer. Forms a tetramer composed of two NrdD and two NrdG subunits.

The catalysed reaction is a ribonucleoside 5'-triphosphate + formate + H(+) = a 2'-deoxyribonucleoside 5'-triphosphate + CO2 + H2O. The enzyme catalyses formate + ATP + H(+) = dATP + CO2 + H2O. It catalyses the reaction CTP + formate + H(+) = dCTP + CO2 + H2O. It carries out the reaction GTP + formate + H(+) = dGTP + CO2 + H2O. The catalysed reaction is UTP + formate + H(+) = dUTP + CO2 + H2O. With respect to regulation, activated under anaerobic conditions by NrdG, a tightly associated activase. Activation involves the formation of a glycyl radical at Gly-681. Exposure of the activated reductase to oxygen leads to C-terminal truncation and inactivation of the protein, by cleavage at the N-terminal side of Gly-681. The presence of zinc protects the protein from proteolysis and prevents the formation of disulfide bridges within it. The enzyme shows a basal activity in the absence of any effector, but reduction is stimulated up to 10-fold by an appropriate modulator (dGTP for ATP reduction, ATP for CTP and UTP reduction, and dTTP for GTP reduction). dGTP and dTTP inhibit the reduction of the incorrect substrate, and dATP inhibits reduction of all four. These modulators act as allosteric effectors. In terms of biological role, catalyzes the conversion of ribonucleotides into deoxyribonucleotides, which are required for DNA synthesis and repair. Can reduce each of the four common ribonucleoside triphosphates. The polypeptide is Anaerobic ribonucleoside-triphosphate reductase (Escherichia coli (strain K12)).